Here is a 404-residue protein sequence, read N- to C-terminus: Exodeoxyribonuclease 7 large subunit (404 aa).

Belongs to the XseA family. In terms of assembly, heterooligomer composed of large and small subunits.

It is found in the cytoplasm. The enzyme catalyses Exonucleolytic cleavage in either 5'- to 3'- or 3'- to 5'-direction to yield nucleoside 5'-phosphates.. Functionally, bidirectionally degrades single-stranded DNA into large acid-insoluble oligonucleotides, which are then degraded further into small acid-soluble oligonucleotides. This chain is Exodeoxyribonuclease 7 large subunit, found in Mesoplasma florum (strain ATCC 33453 / NBRC 100688 / NCTC 11704 / L1) (Acholeplasma florum).